A 155-amino-acid chain; its full sequence is Ribosomal RNA large subunit methyltransferase H (155 aa).

Residues Leu-72, Gly-103, and 122 to 127 (LGRMVW) each bind S-adenosyl-L-methionine.

It belongs to the RNA methyltransferase RlmH family. As to quaternary structure, homodimer.

It is found in the cytoplasm. The enzyme catalyses pseudouridine(1915) in 23S rRNA + S-adenosyl-L-methionine = N(3)-methylpseudouridine(1915) in 23S rRNA + S-adenosyl-L-homocysteine + H(+). Its function is as follows. Specifically methylates the pseudouridine at position 1915 (m3Psi1915) in 23S rRNA. This is Ribosomal RNA large subunit methyltransferase H from Cereibacter sphaeroides (strain ATCC 17029 / ATH 2.4.9) (Rhodobacter sphaeroides).